The sequence spans 457 residues: Succinate-semialdehyde dehydrogenase [NADP(+)] 1 (457 aa).

209 to 214 lines the NADP(+) pocket; it reads GSEPAG. Active-site residues include E231 and C265.

It belongs to the aldehyde dehydrogenase family.

It catalyses the reaction succinate semialdehyde + NAD(+) + H2O = succinate + NADH + 2 H(+). It carries out the reaction succinate semialdehyde + NADP(+) + H2O = succinate + NADPH + 2 H(+). Functionally, catalyzes the NADP(+)-dependent oxidation of succinate semialdehyde to succinate. It is believed to be the main source of succinate semialdehyde dehydrogenase activity in Mycobacterium. The chain is Succinate-semialdehyde dehydrogenase [NADP(+)] 1 (gabD1) from Mycobacterium bovis (strain ATCC BAA-935 / AF2122/97).